The following is a 534-amino-acid chain: DNA-directed RNA polymerase III subunit RPC3 (534 aa).

The tract at residues P161–V181 is disordered. At S194 the chain carries Phosphoserine. The segment at G197–I228 is disordered. Residues G211–I228 show a composition bias toward basic and acidic residues.

The protein belongs to the eukaryotic RPC3/POLR3C RNA polymerase subunit family. As to quaternary structure, component of the RNA polymerase III complex consisting of 17 subunits: a ten-subunit horseshoe-shaped catalytic core composed of POLR3A/RPC1, POLR3B/RPC2, POLR1C/RPAC1, POLR1D/RPAC2, POLR3K/RPC10, POLR2E/RPABC1, POLR2F/RPABC2, POLR2H/RPABC3, POLR2K/RPABC4 and POLR2L/RPABC5; a mobile stalk composed of two subunits POLR3H/RPC8 and CRCP/RPC9, protruding from the core and functioning primarily in transcription initiation; and additional subunits homologous to general transcription factors of the RNA polymerase II machinery, POLR3C/RPC3-POLR3F/RPC6-POLR3G/RPC7 heterotrimer required for transcription initiation and POLR3D/RPC4-POLR3E/RPC5 heterodimer involved in both transcription initiation and termination. Directly interacts with POLR3G/RPC7 and POLR3GL. Directly interacts with POLR3F/RPC6. Interacts with GTF3C4. As part of the RNA polymerase III complex, interacts with PKP2.

The protein localises to the nucleus. Its function is as follows. DNA-dependent RNA polymerase catalyzes the transcription of DNA into RNA using the four ribonucleoside triphosphates as substrates. Specific peripheric component of RNA polymerase III (Pol III) which synthesizes small non-coding RNAs including 5S rRNA, snRNAs, tRNAs and miRNAs from at least 500 distinct genomic loci. Part of POLR3C/RPC3-POLR3F/RPC6-POLR3G/RPC7 heterotrimer, coordinates the dynamics of Pol III stalk and clamp modules during the transition from apo to elongation state. Pol III plays a key role in sensing and limiting infection by intracellular bacteria and DNA viruses. Acts as a nuclear and cytosolic DNA sensor involved in innate immune response. Can sense non-self dsDNA that serves as template for transcription into dsRNA. The non-self RNA polymerase III transcripts, such as Epstein-Barr virus-encoded RNAs (EBERs) induce type I interferon and NF-kappa-B through the RIG-I pathway. Preferentially binds single-stranded DNA (ssDNA) in a sequence-independent manner. This chain is DNA-directed RNA polymerase III subunit RPC3, found in Homo sapiens (Human).